The following is a 373-amino-acid chain: Transmembrane protein adipocyte-associated 1 (373 aa).

N-linked (GlcNAc...) asparagine glycans are attached at residues N11 and N23. The next 7 helical transmembrane spans lie at 48–68 (LLLLIPNVLFLIFLLWKLPSA), 76–96 (SSPIFITFYILVFVVALVGIA), 123–143 (FFLLAIELSVIILGLAFGHLE), 151–171 (VLAITTVLSLAYSVTQGTLEI), 192–212 (QFWLVSSCFFFLVYSLVVILP), 234–254 (ILALLNLLQGLGSVLLCFDII), and 265–285 (FLYFSFFAPLIYVAFLRGFFG). The N-linked (GlcNAc...) asparagine glycan is linked to N361.

This sequence belongs to the UPF0359 family. In terms of tissue distribution, ubiquitous, with higher levels in heart, placenta and kidney.

The protein localises to the membrane. The protein is Transmembrane protein adipocyte-associated 1 (TPRA1) of Homo sapiens (Human).